The following is a 697-amino-acid chain: Glycine--tRNA ligase beta subunit (697 aa).

The protein belongs to the class-II aminoacyl-tRNA synthetase family. Tetramer of two alpha and two beta subunits.

The protein localises to the cytoplasm. The enzyme catalyses tRNA(Gly) + glycine + ATP = glycyl-tRNA(Gly) + AMP + diphosphate. The polypeptide is Glycine--tRNA ligase beta subunit (Cereibacter sphaeroides (strain ATCC 17023 / DSM 158 / JCM 6121 / CCUG 31486 / LMG 2827 / NBRC 12203 / NCIMB 8253 / ATH 2.4.1.) (Rhodobacter sphaeroides)).